The primary structure comprises 247 residues: 5'-nucleotidase SurE (247 aa).

Positions 8, 9, 39, and 91 each coordinate a divalent metal cation.

This sequence belongs to the SurE nucleotidase family. A divalent metal cation serves as cofactor.

It localises to the cytoplasm. It carries out the reaction a ribonucleoside 5'-phosphate + H2O = a ribonucleoside + phosphate. Nucleotidase that shows phosphatase activity on nucleoside 5'-monophosphates. The protein is 5'-nucleotidase SurE of Methylobacillus flagellatus (strain ATCC 51484 / DSM 6875 / VKM B-1610 / KT).